Reading from the N-terminus, the 792-residue chain is Probable beta-D-xylosidase 6 (792 aa).

The N-terminal stretch at 1 to 18 (MNLQLTLISLLFFTSAIA) is a signal peptide. Residues asparagine 44, asparagine 104, asparagine 124, and asparagine 239 are each glycosylated (N-linked (GlcNAc...) asparagine). Aspartate 309 is a catalytic residue. Residues asparagine 444 and asparagine 618 are each glycosylated (N-linked (GlcNAc...) asparagine).

It belongs to the glycosyl hydrolase 3 family.

It is found in the secreted. The protein resides in the extracellular space. It localises to the extracellular matrix. In Arabidopsis thaliana (Mouse-ear cress), this protein is Probable beta-D-xylosidase 6 (BXL6).